A 22-amino-acid polypeptide reads, in one-letter code: NADH-ubiquinone oxidoreductase 16 kDa subunit (22 aa).

As to quaternary structure, complex I is composed of about 45 different subunits.

The protein resides in the mitochondrion inner membrane. It catalyses the reaction a ubiquinone + NADH + 5 H(+)(in) = a ubiquinol + NAD(+) + 4 H(+)(out). Transfer of electrons from NADH to the respiratory chain. The immediate electron acceptor for the enzyme is believed to be ubiquinone. The sequence is that of NADH-ubiquinone oxidoreductase 16 kDa subunit from Solanum tuberosum (Potato).